A 562-amino-acid polypeptide reads, in one-letter code: Arginine--tRNA ligase (562 aa).

The short motif at 129–139 is the 'HIGH' region element; that stretch reads ANPTGPLHVGH.

The protein belongs to the class-I aminoacyl-tRNA synthetase family. In terms of assembly, monomer.

It localises to the cytoplasm. The enzyme catalyses tRNA(Arg) + L-arginine + ATP = L-arginyl-tRNA(Arg) + AMP + diphosphate. This chain is Arginine--tRNA ligase, found in Xylella fastidiosa (strain M12).